The primary structure comprises 76 residues: Omega-conotoxin-like Ai6.3 (76 aa).

The first 22 residues, 1–22 (MKLTCLMIVAVLFLTAWTFVTA), serve as a signal peptide directing secretion. A propeptide spanning residues 23–50 (VPDSSNALENLYLKAHHEMNNPEDSELN) is cleaved from the precursor. 3 disulfide bridges follow: Cys53/Cys67, Cys60/Cys71, and Cys66/Cys75.

The protein belongs to the conotoxin O1 superfamily. As to expression, expressed by the venom duct.

It is found in the secreted. Omega-conotoxins act at presynaptic membranes, they bind and block voltage-gated calcium channels (Cav). This chain is Omega-conotoxin-like Ai6.3, found in Conus ammiralis (Admiral cone).